The primary structure comprises 229 residues: UPF0173 metal-dependent hydrolase SSP1060 (229 aa).

This sequence belongs to the UPF0173 family.

The sequence is that of UPF0173 metal-dependent hydrolase SSP1060 from Staphylococcus saprophyticus subsp. saprophyticus (strain ATCC 15305 / DSM 20229 / NCIMB 8711 / NCTC 7292 / S-41).